Consider the following 286-residue polypeptide: Bifunctional protein FolD (286 aa).

NADP(+)-binding positions include 165 to 167 (GRS), serine 190, and valine 231.

It belongs to the tetrahydrofolate dehydrogenase/cyclohydrolase family. As to quaternary structure, homodimer.

The catalysed reaction is (6R)-5,10-methylene-5,6,7,8-tetrahydrofolate + NADP(+) = (6R)-5,10-methenyltetrahydrofolate + NADPH. It catalyses the reaction (6R)-5,10-methenyltetrahydrofolate + H2O = (6R)-10-formyltetrahydrofolate + H(+). The protein operates within one-carbon metabolism; tetrahydrofolate interconversion. In terms of biological role, catalyzes the oxidation of 5,10-methylenetetrahydrofolate to 5,10-methenyltetrahydrofolate and then the hydrolysis of 5,10-methenyltetrahydrofolate to 10-formyltetrahydrofolate. This is Bifunctional protein FolD from Bacillus cereus (strain B4264).